The primary structure comprises 332 residues: D-amino acid oxidase (332 aa).

Residues Ala-8, Gly-9, Ile-10, Thr-39, Thr-40, Ala-45, Gly-46, Leu-47, Val-161, and Ser-180 each contribute to the FAD site. D-proline contacts are provided by Tyr-218 and Arg-274. Positions 218 and 274 each coordinate D-serine. FAD contacts are provided by Arg-274, Gly-305, Gly-306, Gly-308, and Thr-310. Gly-306 is a binding site for D-proline. Position 306 (Gly-306) interacts with D-serine. Positions 330 to 332 match the Microbody targeting signal motif; sequence AKL.

This sequence belongs to the DAMOX/DASOX family. It depends on FAD as a cofactor.

It is found in the peroxisome matrix. It catalyses the reaction a D-alpha-amino acid + O2 + H2O = a 2-oxocarboxylate + H2O2 + NH4(+). It carries out the reaction D-alanine + O2 + H2O = pyruvate + H2O2 + NH4(+). The enzyme catalyses D-arginine + O2 + H2O = 5-guanidino-2-oxopentanoate + H2O2 + NH4(+). The catalysed reaction is D-asparagine + O2 + H2O = 2-oxosuccinamate + H2O2 + NH4(+). It catalyses the reaction D-cysteine + O2 + H2O = 2-oxo-3-sulfanylpropanoate + H2O2 + NH4(+). It carries out the reaction D-glutamine + O2 + H2O = 2-oxoglutaramate + H2O2 + NH4(+). The enzyme catalyses D-isoleucine + O2 + H2O = (R)-3-methyl-2-oxopentanoate + H2O2 + NH4(+). The catalysed reaction is D-leucine + O2 + H2O = 4-methyl-2-oxopentanoate + H2O2 + NH4(+). It catalyses the reaction D-lysine + O2 + H2O = 6-amino-2-oxohexanoate + H2O2 + NH4(+). It carries out the reaction D-methionine + O2 + H2O = 4-methylsulfanyl-2-oxobutanoate + H2O2 + NH4(+). The enzyme catalyses D-phenylalanine + O2 + H2O = 3-phenylpyruvate + H2O2 + NH4(+). The catalysed reaction is D-proline + O2 = 1-pyrroline-2-carboxylate + H2O2. It catalyses the reaction D-valine + O2 + H2O = 3-methyl-2-oxobutanoate + H2O2 + NH4(+). It carries out the reaction D-histidine + O2 + H2O = 3-(imidazol-5-yl)pyruvate + H2O2 + NH4(+). The enzyme catalyses D-tyrosine + O2 + H2O = 3-(4-hydroxyphenyl)pyruvate + H2O2 + NH4(+). The catalysed reaction is D-serine + O2 + H2O = 3-hydroxypyruvate + H2O2 + NH4(+). It catalyses the reaction D-threonine + O2 + H2O = (S)-3-hydroxy-2-oxobutanoate + H2O2 + NH4(+). It carries out the reaction D-tryptophan + O2 + H2O = indole-3-pyruvate + H2O2 + NH4(+). Its function is as follows. Catalyzes the oxidative deamination of D-amino acids with broad substrate specificity. Could be responsible for the degradation of diet-derived D-alanine in the intestine. Maintains the asexual state of worms and represses early ovarian development. Following sexual induction, the enzyme is required for differentiation of oogonia into oocytes in the developing ovaries. In Dugesia ryukyuensis (Freshwater planarian flatworm), this protein is D-amino acid oxidase.